The sequence spans 198 residues: Probable molybdenum cofactor guanylyltransferase (198 aa).

GTP contacts are provided by residues 11 to 13, Lys-23, Asp-71, and Asp-102; that span reads LAG. Asp-102 contacts Mg(2+).

Belongs to the MobA family. It depends on Mg(2+) as a cofactor.

It localises to the cytoplasm. The enzyme catalyses Mo-molybdopterin + GTP + H(+) = Mo-molybdopterin guanine dinucleotide + diphosphate. Functionally, transfers a GMP moiety from GTP to Mo-molybdopterin (Mo-MPT) cofactor (Moco or molybdenum cofactor) to form Mo-molybdopterin guanine dinucleotide (Mo-MGD) cofactor. The polypeptide is Probable molybdenum cofactor guanylyltransferase (Halalkalibacterium halodurans (strain ATCC BAA-125 / DSM 18197 / FERM 7344 / JCM 9153 / C-125) (Bacillus halodurans)).